The sequence spans 118 residues: Large ribosomal subunit protein bL20 (118 aa).

It belongs to the bacterial ribosomal protein bL20 family.

In terms of biological role, binds directly to 23S ribosomal RNA and is necessary for the in vitro assembly process of the 50S ribosomal subunit. It is not involved in the protein synthesizing functions of that subunit. The sequence is that of Large ribosomal subunit protein bL20 from Proteus mirabilis (strain HI4320).